The primary structure comprises 3001 residues: BEACH domain-containing protein C2 (3001 aa).

7 disordered regions span residues 43–80, 103–156, 1018–1076, 1846–1868, 2039–2071, 2101–2132, and 2193–2212; these read DFEQVSLGDQEKAANESQGDLQEPGSFSNSDHGRSSFG, DVQS…KATV, NVLA…NVGS, TFSSFQKPLEPPNNNAPPRPRDK, YSGTDHHGAAADYDDQTETKSDNGSKGSQSNPP, AEEHKRDEGRISGSHEHASRTSAGNSDPRTSN, and NLADHSDESQSGDQEKDRSW. A Phosphoserine modification is found at Ser-48. Composition is skewed to polar residues over residues 57-72, 121-132, and 1037-1050; these read NESQGDLQEPGSFSNS, SMQQSLSETSLD, and SPYNESGSVKQLDS. Residues 1854 to 1863 are compositionally biased toward pro residues; it reads LEPPNNNAPP. Residues 2101–2119 show a composition bias toward basic and acidic residues; sequence AEEHKRDEGRISGSHEHAS. The span at 2120–2129 shows a compositional bias: polar residues; the sequence is RTSAGNSDPR. One can recognise a BEACH-type PH domain in the interval 2151 to 2260; that stretch reads ELDERILLEL…GRRNAYRAIV (110 aa). Over residues 2196 to 2211 the composition is skewed to basic and acidic residues; that stretch reads DHSDESQSGDQEKDRS. The region spanning 2275–2564 is the BEACH domain; that stretch reads QRPEQLLRRT…QLLTVPHMKR (290 aa). 5 WD repeats span residues 2679 to 2718, 2721 to 2760, 2802 to 2841, 2842 to 2881, and 2953 to 2992; these read SGIRSSSVIAITSDGEIITGGHADNSIKLVSSDGAKTLET, GHCAPVTCLALSPDNNFLVTGSRDSTVLLWRIHKAFTSRT, GHRRELVCCCVSSDQGVVVSSSESSDVLLHSIRKGRLIRR, LVGVKADSLCISSDGVIMAWSSSEGSISVFTINGVLIAKA, and GQGQDITALALNVDNTNLLVSTEDKQLIIFTDPALSLKVV.

This chain is BEACH domain-containing protein C2, found in Arabidopsis thaliana (Mouse-ear cress).